Reading from the N-terminus, the 95-residue chain is MNIRPLQDRVLVRRAEEETKSAGGIILTGSAQEKPSQGEVVAVGNGKKLDNGSTQPMDVKVGDKVLFGKYSGSEVKVNDETLLMMREDDIMGIIG.

Belongs to the GroES chaperonin family. Heptamer of 7 subunits arranged in a ring. Interacts with the chaperonin GroEL.

It is found in the cytoplasm. Functionally, together with the chaperonin GroEL, plays an essential role in assisting protein folding. The GroEL-GroES system forms a nano-cage that allows encapsulation of the non-native substrate proteins and provides a physical environment optimized to promote and accelerate protein folding. GroES binds to the apical surface of the GroEL ring, thereby capping the opening of the GroEL channel. The polypeptide is Co-chaperonin GroES (Francisella philomiragia subsp. philomiragia (strain ATCC 25017 / CCUG 19701 / FSC 153 / O#319-036)).